The chain runs to 452 residues: Peptidase M20 domain-containing protein SMAC_03666.2 (452 aa).

The signal sequence occupies residues 1 to 28 (MKATSNLLLLWGTSLLSPSSAFVIDNHH). A glycan (N-linked (GlcNAc...) asparagine) is linked at asparagine 140. Position 186 (aspartate 186) interacts with Zn(2+). The active-site Proton acceptor is glutamate 220. Position 221 (glutamate 221) interacts with Zn(2+). The N-linked (GlcNAc...) asparagine glycan is linked to asparagine 315.

Belongs to the peptidase M20A family. The cofactor is Zn(2+).

It localises to the secreted. The polypeptide is Peptidase M20 domain-containing protein SMAC_03666.2 (Sordaria macrospora (strain ATCC MYA-333 / DSM 997 / K(L3346) / K-hell)).